Here is a 142-residue protein sequence, read N- to C-terminus: Large ribosomal subunit protein uL11 (142 aa).

Belongs to the universal ribosomal protein uL11 family. Part of the ribosomal stalk of the 50S ribosomal subunit. Interacts with L10 and the large rRNA to form the base of the stalk. L10 forms an elongated spine to which L12 dimers bind in a sequential fashion forming a multimeric L10(L12)X complex. In terms of processing, one or more lysine residues are methylated.

Functionally, forms part of the ribosomal stalk which helps the ribosome interact with GTP-bound translation factors. The sequence is that of Large ribosomal subunit protein uL11 from Magnetococcus marinus (strain ATCC BAA-1437 / JCM 17883 / MC-1).